Reading from the N-terminus, the 224-residue chain is LexA repressor (224 aa).

Residues 41–61 constitute a DNA-binding region (H-T-H motif); the sequence is MREIGDAVGLSSLSSVTHQLN. Catalysis depends on for autocatalytic cleavage activity residues Ser-148 and Lys-185.

Belongs to the peptidase S24 family. In terms of assembly, homodimer.

The catalysed reaction is Hydrolysis of Ala-|-Gly bond in repressor LexA.. Its function is as follows. Represses a number of genes involved in the response to DNA damage (SOS response), including recA and lexA. In the presence of single-stranded DNA, RecA interacts with LexA causing an autocatalytic cleavage which disrupts the DNA-binding part of LexA, leading to derepression of the SOS regulon and eventually DNA repair. The polypeptide is LexA repressor (Leifsonia xyli subsp. xyli (strain CTCB07)).